The sequence spans 641 residues: FAD-binding monooxygenase ausB (641 aa).

The interval 1–68 (MAIGPKPESI…DSTTNVPYSL (68 aa)) is disordered. Residues 49–68 (WLTSTDQPQPDSTTNVPYSL) are compositionally biased toward polar residues. Residues 115–118 (TWYW), 127–128 (DI), and Y133 each bind FAD. 125-127 (MCD) contributes to the NADP(+) binding site. NADP(+) is bound by residues 272–278 (TGSTAVQ) and 295–296 (RT).

The protein belongs to the FAD-binding monooxygenase family. Requires FAD as cofactor.

It carries out the reaction protoaustinoid A + AH2 + O2 = berkeleyone A + A + H2O. It functions in the pathway secondary metabolite biosynthesis; terpenoid biosynthesis. FAD-binding monooxygenase; part of the gene cluster A that mediates the biosynthesis of the fungal meroterpenoid acetoxydehydroaustin. The first step of the pathway is the synthesis of 3,5-dimethylorsellinic acid by the polyketide synthase ausA. 3,5-dimethylorsellinic acid is then prenylated by the polyprenyl transferase ausN. Further epoxidation by the FAD-dependent monooxygenase ausM and cyclization by the probable terpene cyclase ausL lead to the formation of protoaustinoid A. Protoaustinoid A is then oxidized to spiro-lactone preaustinoid A3 by the combined action of the FAD-binding monooxygenases ausB and ausC, and the dioxygenase ausE. Acid-catalyzed keto-rearrangement and ring contraction of the tetraketide portion of preaustinoid A3 by ausJ lead to the formation of preaustinoid A4. The aldo-keto reductase ausK, with the help of ausH, is involved in the next step by transforming preaustinoid A4 into isoaustinone which is in turn hydroxylated by the P450 monooxygenase ausI to form austinolide. The cytochrome P450 monooxygenase ausG then modifies austinolide to austinol. Austinol is further acetylated to austin by the O-acetyltransferase ausP, which spontaneously changes to dehydroaustin. The cytochrome P450 monooxygenase then converts dehydroaustin is into 7-dehydrodehydroaustin. The hydroxylation catalyzed by ausR permits the second O-acetyltransferase ausQ to add an additional acetyl group to the molecule, leading to the formation of acetoxydehydroaustin. Due to genetic rearrangements of the clusters and the subsequent loss of some enzymes, the end product of the Penicillium brasilianum austinoid biosynthesis clusters is acetoxydehydroaustin. In Penicillium brasilianum, this protein is FAD-binding monooxygenase ausB.